Here is a 643-residue protein sequence, read N- to C-terminus: Galactan 5-O-arabinofuranosyltransferase (643 aa).

The next 13 membrane-spanning stretches (helical) occupy residues Val25–Val45, Ala66–Trp86, Leu97–Ala117, Phe180–Trp200, Phe205–Pro225, Ala229–Ala249, Trp255–Tyr272, Val276–Ser293, Leu309–Leu329, Phe355–Val375, Ala384–Ala404, Leu420–Gly440, and Gly445–Ile465. Topologically, residues Pro466–Ala643 are extracellular.

Belongs to the glycosyltransferase 85 family.

The protein resides in the cell membrane. The catalysed reaction is Adds an alpha-D-arabinofuranosyl group from trans,octacis-decaprenylphospho-beta-D-arabinofuranose at the 5-O-position of the eighth, tenth and twelfth galactofuranose unit of the galactofuranan chain of [beta-D-galactofuranosyl-(1-&gt;5)-beta-D-galactofuranosyl-(1-&gt;6)]14-beta-D-galactofuranosyl-(1-&gt;5)-beta-D-galactofuranosyl-(1-&gt;4)-alpha-L-rhamnopyranosyl-(1-&gt;3)-N-acetyl-alpha-D-glucosaminyl-diphospho-trans,octacis-decaprenol.. Its pathway is cell wall biogenesis; cell wall polysaccharide biosynthesis. Functionally, involved in the biosynthesis of the arabinogalactan (AG) region of the mycolylarabinogalactan-peptidoglycan (mAGP) complex, an essential component of the mycobacterial cell wall. Catalyzes the addition of the first key arabinofuranosyl (Araf) residue from the sugar donor decaprenyl-phospho-arabinose (DPA) on the C-5 of a 6-linked galactofuranosyl (Galf) of the galactan domain, thus 'priming' the galactan for further elaboration by other arabinofuranosyltransferases. It is not able to add an Araf residue to a terminal Galf. The sequence is that of Galactan 5-O-arabinofuranosyltransferase from Mycobacterium tuberculosis (strain CDC 1551 / Oshkosh).